A 175-amino-acid polypeptide reads, in one-letter code: NADH-ubiquinone oxidoreductase chain 6 (175 aa).

Transmembrane regions (helical) follow at residues 1–21, 25–45, 47–67, 88–108, and 149–169; these read MMIY…VGFS, SPIY…GIVM, FGGS…MLVV, TVLS…LYMF, and YGVW…LVVL.

It belongs to the complex I subunit 6 family. Core subunit of respiratory chain NADH dehydrogenase (Complex I) which is composed of 45 different subunits.

Its subcellular location is the mitochondrion inner membrane. It carries out the reaction a ubiquinone + NADH + 5 H(+)(in) = a ubiquinol + NAD(+) + 4 H(+)(out). Core subunit of the mitochondrial membrane respiratory chain NADH dehydrogenase (Complex I) which catalyzes electron transfer from NADH through the respiratory chain, using ubiquinone as an electron acceptor. Essential for the catalytic activity and assembly of complex I. This chain is NADH-ubiquinone oxidoreductase chain 6 (MT-ND6), found in Rhinoceros unicornis (Greater Indian rhinoceros).